The sequence spans 117 residues: Protein RALF-like 32 (117 aa).

Residues 1 to 26 (MEIKPSRIFSTITIFFLCLLLAHVTS) form the signal peptide. Positions 27–64 (KASSSSLCNGSVAECSSMVETEEMSVIMESWSSQRLTE) are cleaved as a propeptide — removed in mature form. An N-linked (GlcNAc...) asparagine glycan is attached at Asn35. The interval 77 to 107 (RNQPACDGGKRGESYSTQCLPPPSNPYSRGC) is disordered. Intrachain disulfides connect Cys82–Cys95 and Cys107–Cys113.

The protein belongs to the plant rapid alkalinization factor (RALF) family. Proteolytically cleaved, probably by S1P, a subtilisin-like serine protease (subtilase).

Its subcellular location is the secreted. In terms of biological role, cell signaling peptide that may regulate plant stress, growth, and development. Mediates a rapid alkalinization of extracellular space by mediating a transient increase in the cytoplasmic Ca(2+) concentration leading to a calcium-dependent signaling events through a cell surface receptor and a concomitant activation of some intracellular mitogen-activated protein kinases. In Arabidopsis thaliana (Mouse-ear cress), this protein is Protein RALF-like 32 (RALFL32).